Reading from the N-terminus, the 81-residue chain is ATP synthase subunit c, chloroplastic (81 aa).

A run of 2 helical transmembrane segments spans residues 3 to 23 (PLISSASVIAAGLAVGLASIG) and 57 to 77 (LAFMEALTIYGLVVALALLFA).

The protein belongs to the ATPase C chain family. As to quaternary structure, F-type ATPases have 2 components, F(1) - the catalytic core - and F(0) - the membrane proton channel. F(1) has five subunits: alpha(3), beta(3), gamma(1), delta(1), epsilon(1). F(0) has four main subunits: a(1), b(1), b'(1) and c(10-14). The alpha and beta chains form an alternating ring which encloses part of the gamma chain. F(1) is attached to F(0) by a central stalk formed by the gamma and epsilon chains, while a peripheral stalk is formed by the delta, b and b' chains.

The protein localises to the plastid. It localises to the chloroplast thylakoid membrane. Its function is as follows. F(1)F(0) ATP synthase produces ATP from ADP in the presence of a proton or sodium gradient. F-type ATPases consist of two structural domains, F(1) containing the extramembraneous catalytic core and F(0) containing the membrane proton channel, linked together by a central stalk and a peripheral stalk. During catalysis, ATP synthesis in the catalytic domain of F(1) is coupled via a rotary mechanism of the central stalk subunits to proton translocation. In terms of biological role, key component of the F(0) channel; it plays a direct role in translocation across the membrane. A homomeric c-ring of between 10-14 subunits forms the central stalk rotor element with the F(1) delta and epsilon subunits. The sequence is that of ATP synthase subunit c, chloroplastic from Ceratophyllum demersum (Rigid hornwort).